We begin with the raw amino-acid sequence, 368 residues long: D-alanine--D-alanine ligase (368 aa).

Residues 141-350 (KMIWDYSGLP…YNELIMHLIE (210 aa)) enclose the ATP-grasp domain. 176 to 231 (EKDLEYPLFIKPCRAGSSVGAGMVKNRNELLEQAEESFLWDNKILVEACIEAREVE) lines the ATP pocket. Mg(2+)-binding residues include aspartate 303, glutamate 317, and asparagine 319.

The protein belongs to the D-alanine--D-alanine ligase family. It depends on Mg(2+) as a cofactor. Requires Mn(2+) as cofactor.

The protein localises to the cytoplasm. It catalyses the reaction 2 D-alanine + ATP = D-alanyl-D-alanine + ADP + phosphate + H(+). Its pathway is cell wall biogenesis; peptidoglycan biosynthesis. Functionally, cell wall formation. This Treponema denticola (strain ATCC 35405 / DSM 14222 / CIP 103919 / JCM 8153 / KCTC 15104) protein is D-alanine--D-alanine ligase.